The sequence spans 140 residues: ATP synthase epsilon chain (140 aa).

The protein belongs to the ATPase epsilon chain family. In terms of assembly, F-type ATPases have 2 components, CF(1) - the catalytic core - and CF(0) - the membrane proton channel. CF(1) has five subunits: alpha(3), beta(3), gamma(1), delta(1), epsilon(1). CF(0) has three main subunits: a, b and c.

The protein localises to the cell inner membrane. Functionally, produces ATP from ADP in the presence of a proton gradient across the membrane. This is ATP synthase epsilon chain from Janthinobacterium sp. (strain Marseille) (Minibacterium massiliensis).